The following is an 818-amino-acid chain: Dapper 1-A (818 aa).

Residues 1 to 10 are compositionally biased toward pro residues; sequence MKPIPSPEPP. Disordered regions lie at residues 1–30, 60–80, 122–144, 455–486, and 510–530; these read MKPI…WERH, VLSP…PRSD, IDSE…LSDG, NVTP…SALL, and ESSS…SSSQ. Residues 1–337 form an interaction with tcf7l1-A region; it reads MKPIPSPEPP…PVRTNKPRTS (337 aa). A compositionally biased stretch (basic and acidic residues) spans 21–30; that stretch reads DKGEAEWERH. The stretch at 79 to 130 forms a coiled coil; sequence SDEQKLLEENISLLKKQLNCLRKRDAGLLSQLHELDKQINDLKIDSEKTEET. Over residues 122-132 the composition is skewed to basic and acidic residues; it reads IDSEKTEETDS. Residues 455 to 485 show a composition bias toward polar residues; it reads NVTPNAPANLPNASSSVCNGSPRESTQNSAL. Positions 512–524 are enriched in basic and acidic residues; the sequence is SSFEERPPLDFKS. A PDZ-binding motif is present at residues 815-818; it reads MTTV.

Belongs to the dapper family. As to quaternary structure, interacts with dbf4 and tcf7l1-A. Interacts with dvl2/dsh via the C-terminus. Expressed in the animal and dorsal marginal regions at late blastula and early gastrula stages. Expressed predominantly in the anterior neural plate at neurulation. Expressed mainly in the ectodermal placodes, including the eye anlagen and the otic vesicle, at later stages of development.

Its subcellular location is the cytoplasm. It is found in the nucleus. Its function is as follows. Involved in regulation of intracellular signaling pathways during development. Specifically thought to play a role in canonical and/or non-canonical Wnt signaling pathways through interaction with DSH (Dishevelled) family proteins. Binds to dvl2/dsh and impedes the degradation of beta-catenin (ctnnb1-A and possibly ctnnb1-B), thereby enhancing the transcriptional activation of target genes of the Wnt signaling pathway. Also promotes catenin delta/ctnnd1 stability which in turn promotes zbtb33/kaiso sequestration and thus is involved in the regulation of zbtb33/kaiso-mediated transcriptional repression. May also bind to and directly stimulate the transcriptional activity of tcf7l1-A. Required for eye development and neural patterning. The sequence is that of Dapper 1-A (dact1-a) from Xenopus laevis (African clawed frog).